Consider the following 327-residue polypeptide: Phenylalanine--tRNA ligase alpha subunit (327 aa).

E252 provides a ligand contact to Mg(2+).

Belongs to the class-II aminoacyl-tRNA synthetase family. Phe-tRNA synthetase alpha subunit type 1 subfamily. Tetramer of two alpha and two beta subunits. Mg(2+) serves as cofactor.

It is found in the cytoplasm. It carries out the reaction tRNA(Phe) + L-phenylalanine + ATP = L-phenylalanyl-tRNA(Phe) + AMP + diphosphate + H(+). The sequence is that of Phenylalanine--tRNA ligase alpha subunit from Shewanella woodyi (strain ATCC 51908 / MS32).